The following is a 274-amino-acid chain: Nickel/cobalt efflux system RcnA (274 aa).

Residues M1–N12 lie on the Periplasmic side of the membrane. The helical transmembrane segment at A13–H33 threads the bilayer. The Cytoplasmic portion of the chain corresponds to S34–G56. The helical transmembrane segment at L57–I77 threads the bilayer. Residues S78 to A86 are Periplasmic-facing. A helical transmembrane segment spans residues E87–W107. At R108–I175 the chain is on the cytoplasmic side. Positions H127–H153 are disordered. Positions H129 to H144 are enriched in basic residues. The helical transmembrane segment at L176–I196 threads the bilayer. The Periplasmic portion of the chain corresponds to C197–L209. The chain crosses the membrane as a helical span at residues V210–I230. Over S231–Y251 the chain is Cytoplasmic. Residues F252–I272 traverse the membrane as a helical segment. Residues M273 to R274 lie on the Periplasmic side of the membrane.

The protein belongs to the NiCoT transporter (TC 2.A.52) family. RcnA subfamily.

It is found in the cell inner membrane. Its function is as follows. Efflux system for nickel and cobalt. This Escherichia coli (strain K12) protein is Nickel/cobalt efflux system RcnA (rcnA).